The chain runs to 277 residues: Large ribosomal subunit protein uL2 (277 aa).

Disordered stretches follow at residues 32–58 (KSLTKGKKFKSGRDSSGRISIRRRGGG) and 225–277 (VAMN…RRNK). Over residues 258 to 277 (YKTRKKKRYSDKFIIKRRNK) the composition is skewed to basic residues.

The protein belongs to the universal ribosomal protein uL2 family. As to quaternary structure, part of the 50S ribosomal subunit. Forms a bridge to the 30S subunit in the 70S ribosome.

Functionally, one of the primary rRNA binding proteins. Required for association of the 30S and 50S subunits to form the 70S ribosome, for tRNA binding and peptide bond formation. It has been suggested to have peptidyltransferase activity; this is somewhat controversial. Makes several contacts with the 16S rRNA in the 70S ribosome. The protein is Large ribosomal subunit protein uL2 of Borreliella burgdorferi (strain ATCC 35210 / DSM 4680 / CIP 102532 / B31) (Borrelia burgdorferi).